The following is a 1012-amino-acid chain: Klotho (1012 aa).

The first 33 residues, 1–33 (MPASAPPRRPRPPPPSLSLLLVLLGLGGRRLRA), serve as a signal peptide directing secretion. The Extracellular portion of the chain corresponds to 34–981 (EPGDGAQTWA…ECSFFHTRKS (948 aa)). 2 glycosyl hydrolase-1 regions span residues 57–506 (FQGT…KNGF) and 515–953 (LEGT…SNGF). N-linked (GlcNAc...) asparagine glycosylation is found at N106, N159, N283, N344, N607, N612, and N694. A helical transmembrane segment spans residues 982–1002 (LLAFIAFLFFASIISLSLIFY). The Cytoplasmic segment spans residues 1003 to 1012 (YSKKGRRSYK).

Belongs to the glycosyl hydrolase 1 family. Klotho subfamily. In terms of assembly, homodimer. Interacts with FGF23 and FGFR1. Post-translationally, N-glycosylated. Present in cortical renal tubules (at protein level). Soluble peptide is present in serum and cerebrospinal fluid. Expressed in kidney, placenta, small intestine and prostate. Down-regulated in renal cell carcinomas, hepatocellular carcinomas, and in chronic renal failure kidney.

It localises to the cell membrane. The protein resides in the apical cell membrane. It is found in the secreted. The catalysed reaction is a beta-D-glucuronoside + H2O = D-glucuronate + an alcohol. In terms of biological role, may have weak glycosidase activity towards glucuronylated steroids. However, it lacks essential active site Glu residues at positions 239 and 872, suggesting it may be inactive as a glycosidase in vivo. May be involved in the regulation of calcium and phosphorus homeostasis by inhibiting the synthesis of active vitamin D. Essential factor for the specific interaction between FGF23 and FGFR1. Its function is as follows. The Klotho peptide generated by cleavage of the membrane-bound isoform may be an anti-aging circulating hormone which would extend life span by inhibiting insulin/IGF1 signaling. The chain is Klotho (KL) from Homo sapiens (Human).